Consider the following 566-residue polypeptide: Proline--tRNA ligase (566 aa).

The protein belongs to the class-II aminoacyl-tRNA synthetase family. ProS type 1 subfamily. As to quaternary structure, homodimer.

It is found in the cytoplasm. It catalyses the reaction tRNA(Pro) + L-proline + ATP = L-prolyl-tRNA(Pro) + AMP + diphosphate. Functionally, catalyzes the attachment of proline to tRNA(Pro) in a two-step reaction: proline is first activated by ATP to form Pro-AMP and then transferred to the acceptor end of tRNA(Pro). As ProRS can inadvertently accommodate and process non-cognate amino acids such as alanine and cysteine, to avoid such errors it has two additional distinct editing activities against alanine. One activity is designated as 'pretransfer' editing and involves the tRNA(Pro)-independent hydrolysis of activated Ala-AMP. The other activity is designated 'posttransfer' editing and involves deacylation of mischarged Ala-tRNA(Pro). The misacylated Cys-tRNA(Pro) is not edited by ProRS. This chain is Proline--tRNA ligase, found in Coxiella burnetii (strain RSA 493 / Nine Mile phase I).